The primary structure comprises 506 residues: Lysine--tRNA ligase (506 aa).

Residues glutamate 416 and glutamate 423 each coordinate Mg(2+).

This sequence belongs to the class-II aminoacyl-tRNA synthetase family. In terms of assembly, homodimer. Mg(2+) serves as cofactor.

The protein resides in the cytoplasm. The enzyme catalyses tRNA(Lys) + L-lysine + ATP = L-lysyl-tRNA(Lys) + AMP + diphosphate. The protein is Lysine--tRNA ligase of Bordetella parapertussis (strain 12822 / ATCC BAA-587 / NCTC 13253).